The chain runs to 142 residues: Large ribosomal subunit protein uL13 (142 aa).

It belongs to the universal ribosomal protein uL13 family. Part of the 50S ribosomal subunit.

In terms of biological role, this protein is one of the early assembly proteins of the 50S ribosomal subunit, although it is not seen to bind rRNA by itself. It is important during the early stages of 50S assembly. In Azoarcus sp. (strain BH72), this protein is Large ribosomal subunit protein uL13.